A 402-amino-acid chain; its full sequence is Putative F-box protein At4g22180 (402 aa).

An F-box domain is found at 18–64 (PNSWSELPLDLLTAVFERLSYANFQRAKSVCSSWHSGSRQSVPIQIP).

This chain is Putative F-box protein At4g22180, found in Arabidopsis thaliana (Mouse-ear cress).